We begin with the raw amino-acid sequence, 555 residues long: Formate--tetrahydrofolate ligase (555 aa).

Residue 65-72 (TPAGEGKS) coordinates ATP.

The protein belongs to the formate--tetrahydrofolate ligase family.

The catalysed reaction is (6S)-5,6,7,8-tetrahydrofolate + formate + ATP = (6R)-10-formyltetrahydrofolate + ADP + phosphate. The protein operates within one-carbon metabolism; tetrahydrofolate interconversion. The protein is Formate--tetrahydrofolate ligase of Staphylococcus aureus (strain USA300).